The chain runs to 140 residues: Large ribosomal subunit protein uL11 (140 aa).

The protein belongs to the universal ribosomal protein uL11 family. As to quaternary structure, part of the ribosomal stalk of the 50S ribosomal subunit. Interacts with L10 and the large rRNA to form the base of the stalk. L10 forms an elongated spine to which L12 dimers bind in a sequential fashion forming a multimeric L10(L12)X complex. In terms of processing, one or more lysine residues are methylated.

Functionally, forms part of the ribosomal stalk which helps the ribosome interact with GTP-bound translation factors. The polypeptide is Large ribosomal subunit protein uL11 (Pelobacter propionicus (strain DSM 2379 / NBRC 103807 / OttBd1)).